We begin with the raw amino-acid sequence, 461 residues long: Coagulation factor IX (461 aa).

The first 28 residues, 1–28 (MQRVNMIMAESPGLITICLLGYLLSAEC), serve as a signal peptide directing secretion. Residues 29–46 (TVFLDHENANKILNRPKR) constitute a propeptide that is removed on maturation. The Ca(2+) site is built by Tyr-47, Asn-48, Glu-53, Glu-54, Glu-61, Glu-63, Glu-66, Glu-67, Glu-72, Glu-73, and Glu-76. The region spanning 47–92 (YNSGKLEEFVQGNLERECMEEKCSFEEAREVFENTERTTEFWKQYV) is the Gla domain. 4-carboxyglutamate occurs at positions 53, 54, 61, 63, 66, 67, 72, 73, 76, 79, and 82. Residue Glu-61 coordinates Mg(2+). An intrachain disulfide couples Cys-64 to Cys-69. Glu-66 is a binding site for Mg(2+). Residue Glu-72 participates in Mg(2+) binding. Glu-76 serves as a coordination point for Mg(2+). Residue Glu-82 coordinates Ca(2+). Glu-82 is a Mg(2+) binding site. Thr-85 carries O-linked (GalNAc...) threonine glycosylation. 4 residues coordinate Ca(2+): Glu-86, Asp-93, Gly-94, and Gln-96. 4-carboxyglutamate is present on Glu-86. Mg(2+) is bound at residue Glu-86. The EGF-like 1; calcium-binding domain occupies 93 to 129 (DGDQCESNPCLNGGSCKDDINSYECWCPFGFEGKNCE). 10 cysteine pairs are disulfide-bonded: Cys-97–Cys-108, Cys-102–Cys-117, Cys-119–Cys-128, Cys-134–Cys-145, Cys-141–Cys-155, Cys-157–Cys-170, Cys-178–Cys-335, Cys-252–Cys-268, Cys-382–Cys-396, and Cys-407–Cys-435. Residue Ser-99 is glycosylated (O-linked (Glc...) serine). The O-linked (Fuc...) serine glycan is linked to Ser-107. Asp-110 and Asp-111 together coordinate Ca(2+). Asp-110 is modified ((3R)-3-hydroxyaspartate). Position 114 is a phosphoserine (Ser-114). Residues 130-171 (LDVTCNIKNGRCEQFCKNSADNKVVCSCTEGYRLAENQKSCE) enclose the EGF-like 2 domain. A propeptide spans 192–226 (AETVFPDVDYVNSTEAETILDNITQSTQSFNDFTR) (activation peptide). The residue at position 201 (Tyr-201) is a Sulfotyrosine. N-linked (GlcNAc...) asparagine glycosylation is present at Asn-203. A Phosphoserine modification is found at Ser-204. At Thr-205 the chain carries Phosphothreonine; alternate. The O-linked (GalNAc...) threonine; alternate glycan is linked to Thr-205. Residue Asn-213 is glycosylated (N-linked (GlcNAc...) asparagine). Thr-215 and Thr-225 each carry an O-linked (GalNAc...) threonine glycan. The Peptidase S1 domain maps to 227-459 (VVGGEDAKPG…YVNWIKEKTK (233 aa)). His-267 (charge relay system) is an active-site residue. The Ca(2+) site is built by Glu-281, Asn-283, Glu-286, Glu-288, and Glu-291. Asp-315 serves as the catalytic Charge relay system. The Charge relay system role is filled by Ser-411.

This sequence belongs to the peptidase S1 family. As to quaternary structure, heterodimer of a light chain and a heavy chain; disulfide-linked. Interacts (inactive and activated) with F11 (activated) in calcium-dependent manner. Interacts with SERPINC1. Interacts (activated) with iripin-8, a serine protease inhibitor from Ixodes ricinus saliva. Interacts (inactive and activated) with nitrophorin-2, an anticoagulant protein from Rhodnius prolixus. Post-translationally, activated by factor XIa, which excises the activation peptide. The propeptide can also be removed by snake venom protease. Activated by coagulation factor VIIa-tissue factor (F7-F3) complex in calcium-dependent manner. The iron and 2-oxoglutarate dependent 3-hydroxylation of aspartate and asparagine is (R) stereospecific within EGF domains. Detected in blood plasma (at protein level). Synthesized primarily in the liver and secreted in plasma.

It is found in the secreted. It catalyses the reaction Selective cleavage of Arg-|-Ile bond in factor X to form factor Xa.. In terms of biological role, factor IX is a vitamin K-dependent plasma protein that participates in the intrinsic pathway of blood coagulation by converting factor X to its active form in the presence of Ca(2+) ions, phospholipids, and factor VIIIa. This Homo sapiens (Human) protein is Coagulation factor IX (F9).